The chain runs to 380 residues: 1-deoxy-D-xylulose 5-phosphate reductoisomerase (380 aa).

Residues threonine 10, glycine 11, serine 12, isoleucine 13, glycine 35, and asparagine 121 each contribute to the NADPH site. Lysine 122 is a binding site for 1-deoxy-D-xylulose 5-phosphate. Glutamate 123 contributes to the NADPH binding site. Aspartate 147 is a Mn(2+) binding site. 1-deoxy-D-xylulose 5-phosphate is bound by residues serine 148, glutamate 149, serine 173, and histidine 196. Glutamate 149 serves as a coordination point for Mn(2+). Glycine 202 is an NADPH binding site. 4 residues coordinate 1-deoxy-D-xylulose 5-phosphate: serine 209, asparagine 214, lysine 215, and glutamate 218. Position 218 (glutamate 218) interacts with Mn(2+).

Belongs to the DXR family. The cofactor is Mg(2+). Requires Mn(2+) as cofactor.

The enzyme catalyses 2-C-methyl-D-erythritol 4-phosphate + NADP(+) = 1-deoxy-D-xylulose 5-phosphate + NADPH + H(+). It participates in isoprenoid biosynthesis; isopentenyl diphosphate biosynthesis via DXP pathway; isopentenyl diphosphate from 1-deoxy-D-xylulose 5-phosphate: step 1/6. In terms of biological role, catalyzes the NADPH-dependent rearrangement and reduction of 1-deoxy-D-xylulose-5-phosphate (DXP) to 2-C-methyl-D-erythritol 4-phosphate (MEP). This chain is 1-deoxy-D-xylulose 5-phosphate reductoisomerase, found in Lachnospira eligens (strain ATCC 27750 / DSM 3376 / VPI C15-48 / C15-B4) (Eubacterium eligens).